Consider the following 319-residue polypeptide: Acetyl-coenzyme A carboxylase carboxyl transferase subunit alpha (319 aa).

Residues 32–293 (NVDTEVRALE…KAVLLNELEA (262 aa)) form the CoA carboxyltransferase C-terminal domain.

Belongs to the AccA family. Acetyl-CoA carboxylase is a heterohexamer composed of biotin carboxyl carrier protein (AccB), biotin carboxylase (AccC) and two subunits each of ACCase subunit alpha (AccA) and ACCase subunit beta (AccD).

It localises to the cytoplasm. The catalysed reaction is N(6)-carboxybiotinyl-L-lysyl-[protein] + acetyl-CoA = N(6)-biotinyl-L-lysyl-[protein] + malonyl-CoA. It functions in the pathway lipid metabolism; malonyl-CoA biosynthesis; malonyl-CoA from acetyl-CoA: step 1/1. In terms of biological role, component of the acetyl coenzyme A carboxylase (ACC) complex. First, biotin carboxylase catalyzes the carboxylation of biotin on its carrier protein (BCCP) and then the CO(2) group is transferred by the carboxyltransferase to acetyl-CoA to form malonyl-CoA. The sequence is that of Acetyl-coenzyme A carboxylase carboxyl transferase subunit alpha from Xylella fastidiosa (strain 9a5c).